A 309-amino-acid polypeptide reads, in one-letter code: Foldase protein PrsA 2 (309 aa).

Positions 1–22 (MKQMNKLITGVVTLATVVTLSA) are cleaved as a signal peptide. C23 is lipidated: N-palmitoyl cysteine. C23 is lipidated: S-diacylglycerol cysteine. The region spanning 146-241 (TPTMTAEIMQ…RTYHIIKVTK (96 aa)) is the PpiC domain.

It belongs to the PrsA family.

Its subcellular location is the cell membrane. It catalyses the reaction [protein]-peptidylproline (omega=180) = [protein]-peptidylproline (omega=0). Functionally, plays a major role in protein secretion by helping the post-translocational extracellular folding of several secreted proteins. The polypeptide is Foldase protein PrsA 2 (Streptococcus pyogenes serotype M6 (strain ATCC BAA-946 / MGAS10394)).